Reading from the N-terminus, the 344-residue chain is Arginine N-succinyltransferase (344 aa).

Leu125 contributes to the succinyl-CoA binding site. The Proton donor role is filled by His229.

It belongs to the arginine N-succinyltransferase family.

The enzyme catalyses succinyl-CoA + L-arginine = N(2)-succinyl-L-arginine + CoA + H(+). It participates in amino-acid degradation; L-arginine degradation via AST pathway; L-glutamate and succinate from L-arginine: step 1/5. Functionally, catalyzes the transfer of succinyl-CoA to arginine to produce N(2)-succinylarginine. In Escherichia coli O157:H7, this protein is Arginine N-succinyltransferase.